Reading from the N-terminus, the 94-residue chain is uncharacterized protein (94 aa).

Positions 13–67 (IQESLDELNVSLREFARAMEIAPSTASRLLTGKAALTPEMAIKLSVVIGSSPQMW) constitute an HTH cro/C1-type domain. The segment at residues 24-43 (LREFARAMEIAPSTASRLLT) is a DNA-binding region (H-T-H motif).

It belongs to the VapA/VapI family.

This is an uncharacterized protein from Escherichia coli (strain K12).